The chain runs to 290 residues: Xyloglucan endotransglucosylase/hydrolase protein 3 (290 aa).

Positions 1-21 are cleaved as a signal peptide; it reads MDYMRIFSVFVVTLWIIRVDA. A GH16 domain is found at 22–220; the sequence is RVFGGRGIEK…WSYSPFIAHF (199 aa). Glutamate 109 acts as the Nucleophile in catalysis. Glutamate 113 (proton donor) is an active-site residue. Xyloglucan contacts are provided by residues glutamate 113, 126 to 128, 136 to 138, 199 to 200, and glycine 204; these read QTN, NRE, and DW. Asparagine 210 is a glycosylation site (N-linked (GlcNAc...) asparagine). Cystine bridges form between cysteine 228–cysteine 240 and cysteine 276–cysteine 289.

Belongs to the glycosyl hydrolase 16 family. XTH group 1 subfamily. Contains at least one intrachain disulfide bond essential for its enzymatic activity. Predominantly expressed in flower buds.

It localises to the secreted. The protein resides in the cell wall. It is found in the extracellular space. Its subcellular location is the apoplast. It catalyses the reaction breaks a beta-(1-&gt;4) bond in the backbone of a xyloglucan and transfers the xyloglucanyl segment on to O-4 of the non-reducing terminal glucose residue of an acceptor, which can be a xyloglucan or an oligosaccharide of xyloglucan.. Its function is as follows. Catalyzes xyloglucan endohydrolysis (XEH) and/or endotransglycosylation (XET). Cleaves and religates xyloglucan polymers, an essential constituent of the primary cell wall, and thereby participates in cell wall construction of growing tissues. The chain is Xyloglucan endotransglucosylase/hydrolase protein 3 (XTH3) from Arabidopsis thaliana (Mouse-ear cress).